A 205-amino-acid polypeptide reads, in one-letter code: Cytochrome c biogenesis ATP-binding export protein CcmA 2 (205 aa).

The region spanning 2–205 (LEARDLHCER…LALTGGEAGL (204 aa)) is the ABC transporter domain. 34 to 41 (GGNGAGKT) is a binding site for ATP.

It belongs to the ABC transporter superfamily. CcmA exporter (TC 3.A.1.107) family. As to quaternary structure, the complex is composed of two ATP-binding proteins (CcmA) and two transmembrane proteins (CcmB).

It localises to the cell inner membrane. It catalyses the reaction heme b(in) + ATP + H2O = heme b(out) + ADP + phosphate + H(+). Functionally, part of the ABC transporter complex CcmAB involved in the biogenesis of c-type cytochromes; once thought to export heme, this seems not to be the case, but its exact role is uncertain. Responsible for energy coupling to the transport system. The protein is Cytochrome c biogenesis ATP-binding export protein CcmA 2 of Salmonella paratyphi A (strain ATCC 9150 / SARB42).